The chain runs to 156 residues: MTQLKYLLLVSRQGKIRLKKWYTAMSAGEKAKIVKDLTPTILARKPKMCNIIEYNDHKVVYKRYASLYFIVGMTPDVDNELLTLEIIHRFVETMDTYFGNVCELDIIFNFSKVYDILNEMIMCDGSIAESSRKEVLHHVTVMDTMESNDNLERVLS.

It belongs to the adaptor complexes small subunit family. As to quaternary structure, adapter protein complex 1 (AP-1) is a heterotetramer composed of two large adaptins (gamma-type subunit APL4 and beta-type subunit APL2), a medium adaptin (mu-type subunit APM1) and a small adaptin (sigma-type subunit APS1). AP-1 interacts with clathrin. Also a component of the AP-1R complex composed of at least APM2, APL4 and APS1.

It is found in the cytoplasm. The protein resides in the nucleus. The protein localises to the cytoplasmic vesicle. It localises to the clathrin-coated vesicle membrane. Its subcellular location is the endosome. It is found in the golgi apparatus. Functionally, component of the adapter complexes which link clathrin to receptors in coated vesicles. Clathrin-associated protein complexes are believed to interact with the cytoplasmic tails of membrane proteins, leading to their selection and concentration. AP19 is probably a subunit of the Golgi membrane adapter. Component of the AP-1-related (AP-1R) complex, an adapter protein complex that mediates sorting of cargo SNARE SNC1. In contrast to the APM1-containing AP-1 complex, AP-1R is incapable of sorting CHS3. In Saccharomyces cerevisiae (strain ATCC 204508 / S288c) (Baker's yeast), this protein is AP-1 complex subunit sigma-1 (APS1).